The sequence spans 232 residues: Phosphatidylserine decarboxylase proenzyme (232 aa).

Ser201 functions as the Schiff-base intermediate with substrate; via pyruvic acid in the catalytic mechanism. Ser201 carries the pyruvic acid (Ser); by autocatalysis modification.

This sequence belongs to the phosphatidylserine decarboxylase family. PSD-A subfamily. In terms of assembly, heterodimer of a large membrane-associated beta subunit and a small pyruvoyl-containing alpha subunit. Pyruvate serves as cofactor. Is synthesized initially as an inactive proenzyme. Formation of the active enzyme involves a self-maturation process in which the active site pyruvoyl group is generated from an internal serine residue via an autocatalytic post-translational modification. Two non-identical subunits are generated from the proenzyme in this reaction, and the pyruvate is formed at the N-terminus of the alpha chain, which is derived from the carboxyl end of the proenzyme. The post-translation cleavage follows an unusual pathway, termed non-hydrolytic serinolysis, in which the side chain hydroxyl group of the serine supplies its oxygen atom to form the C-terminus of the beta chain, while the remainder of the serine residue undergoes an oxidative deamination to produce ammonia and the pyruvoyl prosthetic group on the alpha chain.

Its subcellular location is the cell membrane. The enzyme catalyses a 1,2-diacyl-sn-glycero-3-phospho-L-serine + H(+) = a 1,2-diacyl-sn-glycero-3-phosphoethanolamine + CO2. It participates in phospholipid metabolism; phosphatidylethanolamine biosynthesis; phosphatidylethanolamine from CDP-diacylglycerol: step 2/2. Functionally, catalyzes the formation of phosphatidylethanolamine (PtdEtn) from phosphatidylserine (PtdSer). The chain is Phosphatidylserine decarboxylase proenzyme from Mycolicibacterium gilvum (strain PYR-GCK) (Mycobacterium gilvum (strain PYR-GCK)).